The chain runs to 1000 residues: C2 domain-containing protein 5 (1000 aa).

The C2 domain maps to 1 to 109 (MPGKLKVKIV…EAATVISGWF (109 aa)). The Ca(2+) site is built by D19, D26, D76, D78, S81, and D84. Position 197 is a phosphoserine; by PKB/AKT2 (S197). Phosphoserine is present on residues S200 and S260. The disordered stretch occupies residues 265–330 (MKEIPFNEDP…SGSAGKEGGP (66 aa)). Positions 274 to 289 (PNPNTHSSGPSTPLKN) are enriched in polar residues. Residues 290 to 318 (QTYSFSPSKSYSRQSSSSDTDLSLTPKTG) show a composition bias toward low complexity. S293, S295, S304, S305, and S306 each carry phosphoserine. A Phosphothreonine modification is found at T317. Positions 319 to 328 (MGSGSAGKEG) are enriched in gly residues. A Phosphoserine modification is found at S323. T601 is modified (phosphothreonine). Residues 639 to 669 (EIIGSPIPEPRQRSRLLRSQSESSDEVTELD) form a disordered region. Phosphoserine occurs at positions 643, 657, 659, 661, and 662. T666 is subject to Phosphothreonine. At S671 the chain carries Phosphoserine. T807 is modified (phosphothreonine). S817 and S852 each carry phosphoserine.

The cofactor is Ca(2+). Phosphorylated on Ser-197 by active myristoylated kinase AKT2; insulin-stimulated phosphorylation by AKT2 regulates SLC2A4/GLUT4 translocation into the plasma membrane.

It is found in the cytoplasmic vesicle membrane. Its subcellular location is the cytoplasm. The protein resides in the cell cortex. The protein localises to the cell membrane. It localises to the cell projection. It is found in the ruffle. Its function is as follows. Required for insulin-stimulated glucose transport and glucose transporter SLC2A4/GLUT4 translocation from intracellular glucose storage vesicle (GSV) to the plasma membrane (PM) in adipocytes. Binds phospholipid membranes in a calcium-dependent manner and is necessary for the optimal membrane fusion between SLC2A4/GLUT4 GSV and the PM. The polypeptide is C2 domain-containing protein 5 (C2CD5) (Homo sapiens (Human)).